The sequence spans 543 residues: CTP synthase (543 aa).

The segment at 1–266 is amidoligase domain; sequence MKTNYIFVTG…DDYICERFSL (266 aa). A CTP-binding site is contributed by Ser-14. Ser-14 lines the UTP pocket. ATP contacts are provided by residues 15–20 and Asp-72; that span reads SLGKGI. Mg(2+) contacts are provided by Asp-72 and Glu-140. CTP-binding positions include 147 to 149, 187 to 192, and Lys-223; these read DIE and KTKPTQ. Residues 187 to 192 and Lys-223 each bind UTP; that span reads KTKPTQ. 239–241 is a binding site for ATP; that stretch reads KDV. In terms of domain architecture, Glutamine amidotransferase type-1 spans 291 to 538; the sequence is TVGIVGKYID…IKAASEYQKK (248 aa). Gly-352 contacts L-glutamine. Catalysis depends on Cys-379, which acts as the Nucleophile; for glutamine hydrolysis. L-glutamine is bound by residues 380 to 383, Glu-403, and Arg-466; that span reads LGMQ. Catalysis depends on residues His-511 and Glu-513.

This sequence belongs to the CTP synthase family. As to quaternary structure, homotetramer.

It carries out the reaction UTP + L-glutamine + ATP + H2O = CTP + L-glutamate + ADP + phosphate + 2 H(+). It catalyses the reaction L-glutamine + H2O = L-glutamate + NH4(+). The enzyme catalyses UTP + NH4(+) + ATP = CTP + ADP + phosphate + 2 H(+). It participates in pyrimidine metabolism; CTP biosynthesis via de novo pathway; CTP from UDP: step 2/2. Allosterically activated by GTP, when glutamine is the substrate; GTP has no effect on the reaction when ammonia is the substrate. The allosteric effector GTP functions by stabilizing the protein conformation that binds the tetrahedral intermediate(s) formed during glutamine hydrolysis. Inhibited by the product CTP, via allosteric rather than competitive inhibition. Its function is as follows. Catalyzes the ATP-dependent amination of UTP to CTP with either L-glutamine or ammonia as the source of nitrogen. Regulates intracellular CTP levels through interactions with the four ribonucleotide triphosphates. In Baumannia cicadellinicola subsp. Homalodisca coagulata, this protein is CTP synthase.